Consider the following 128-residue polypeptide: Small ribosomal subunit protein uS14m (128 aa).

The protein belongs to the universal ribosomal protein uS14 family. As to quaternary structure, component of the mitochondrial small ribosomal subunit (mt-SSU). Mature mammalian 55S mitochondrial ribosomes consist of a small (28S) and a large (39S) subunit. The 28S small subunit contains a 12S ribosomal RNA (12S mt-rRNA) and 30 different proteins. The 39S large subunit contains a 16S rRNA (16S mt-rRNA), a copy of mitochondrial valine transfer RNA (mt-tRNA(Val)), which plays an integral structural role, and 52 different proteins. Interacts with LIAT1.

It localises to the mitochondrion. This Homo sapiens (Human) protein is Small ribosomal subunit protein uS14m.